We begin with the raw amino-acid sequence, 369 residues long: Ferredoxin--NADP reductase, chloroplastic (369 aa).

The N-terminal 55 residues, 1 to 55 (MTTAVTAAVSFPSTKTTSLSARSSSVISPDKISYKKVPLYYRNVSATGKMGPIRA), are a transit peptide targeting the chloroplast. The FAD-binding FR-type domain maps to 90 to 212 (KTPYVGRCLL…TGPVGKEMLM (123 aa)). FAD contacts are provided by residues 148 to 151 (RLYS), 169 to 171 (CVK), tyrosine 175, 186 to 188 (VCS), and threonine 227. NADP(+) contacts are provided by serine 151 and lysine 171. NADP(+)-binding positions include threonine 227, 259–260 (VP), 289–290 (SR), 299–301 (KMY), 328–329 (GL), and glutamate 367.

This sequence belongs to the ferredoxin--NADP reductase type 1 family. It depends on FAD as a cofactor.

The protein localises to the plastid. The protein resides in the chloroplast stroma. It localises to the chloroplast thylakoid membrane. The enzyme catalyses 2 reduced [2Fe-2S]-[ferredoxin] + NADP(+) + H(+) = 2 oxidized [2Fe-2S]-[ferredoxin] + NADPH. The protein operates within energy metabolism; photosynthesis. In terms of biological role, may play a key role in regulating the relative amounts of cyclic and non-cyclic electron flow to meet the demands of the plant for ATP and reducing power. The sequence is that of Ferredoxin--NADP reductase, chloroplastic (PETH) from Spinacia oleracea (Spinach).